A 669-amino-acid chain; its full sequence is Small ribosomal subunit protein mS39 (669 aa).

The transit peptide at Met1–Cys13 directs the protein to the mitochondrion. PPR repeat units follow at residues Ile129–Pro163, Ser164–Asp199, Arg209–Arg239, Asn240–Ala274, Asp275–Pro314, Asn315–Pro351, Ser352–Arg392, Asp396–Gly430, Gln438–Pro472, Asn473–Asn507, and Ser556–Pro590. Positions Asp186–Glu218 are disordered. Over residues Gln194–Thr203 the composition is skewed to acidic residues. The segment at Glu648–Glu669 is disordered. The segment covering Ser653–Ser663 has biased composition (low complexity).

The protein belongs to the mitochondrion-specific ribosomal protein mS39 family.

The protein resides in the mitochondrion. Functionally, mitochondrial protein that may have a role in mitochondrial translation. This Xenopus laevis (African clawed frog) protein is Small ribosomal subunit protein mS39 (ptcd3).